A 347-amino-acid chain; its full sequence is HTH-type transcriptional regulator PhcA (347 aa).

The 61-residue stretch at 1 to 61 folds into the HTH lysR-type domain; it reads MVNVDTKLLV…IRVPHGLTPT (61 aa). The H-T-H motif DNA-binding region spans 21–40; that stretch reads ATYVAEKMHMTAPAVSHSLG. Residues 316 to 347 are disordered; it reads PMHPPMLTDDSGKSGKTGKGDAEKEDESRLSV. Positions 325–347 are enriched in basic and acidic residues; the sequence is DSGKSGKTGKGDAEKEDESRLSV.

Belongs to the LysR transcriptional regulatory family.

Functionally, regulates the transcription of one or more of the genes involved in virulence. The sequence is that of HTH-type transcriptional regulator PhcA (phcA) from Ralstonia nicotianae (strain ATCC BAA-1114 / GMI1000) (Ralstonia solanacearum).